A 280-amino-acid polypeptide reads, in one-letter code: Thioesterase pynI (280 aa).

The span at 136–145 (LADDSDDEDN) shows a compositional bias: acidic residues. A disordered region spans residues 136 to 167 (LADDSDDEDNRSDASDASDDGSTMSDEEEEDD).

Belongs to the AMT4 thioesterase family.

It participates in secondary metabolite biosynthesis. Its function is as follows. Thioesterase; part of the gene cluster that mediates the biosynthesis of pyranonigrins, a family of antioxidative compounds. The first step of pyranonigrins biosynthesis is performed by the hybrid PKS-NRPS synthetase that condenses 6 malonyl-CoA units to an acetyl starter unit, to form a 1,3,5-trioxotetradecane-6,8-dienyl-ACP. The enoyl reductase (ER) domain of pynA is likely to be functional during the first two rounds of polyketide chain extension, to generate the saturated C-C bonds of the alkyl side chain. PynA subsequently forms the amide bond between the acyl chain and L-serine. Although pynA has a terminal reductase domain, it appears to require the thioesterase pynI for the release of the straight-chain intermediate from pynA via the formation of a tetramic acid pyranonigrin J. The methyltransferase pynC then coverts pyranonigrin J to pyranonigrin I via N-methylation. The FAD-dependent monooxygenase pynG catalyzes an epoxidation-mediated cyclization to form the dihydro-gamma-pyrone moiety, followed by pynD-catalyzed oxidation of the alcohol to the ketone and enolization to yield the characteristic tetramic acid-fused gamma-pyrone core of pyranonigrin H. Pyranonigrin H is substrate of pynH for dehydration-mediated exo-methylene formation from the serine side chain to produce pyranonigrin E, before the oxidase pynE reduces the exo-methylene of pyranonigrin E into a pendant methyl to form pyranonigrin G. The FAD-linked oxidoreductase pynB performs the reverse reaction and converts pyranonigrin G back to pyranonigrin E. The protein is Thioesterase pynI of Aspergillus niger (strain ATCC MYA-4892 / CBS 513.88 / FGSC A1513).